The primary structure comprises 359 residues: Phospho-N-acetylmuramoyl-pentapeptide-transferase (359 aa).

Helical transmembrane passes span 24–44, 72–92, 100–120, 134–154, 170–190, 197–217, 234–254, 261–281, 289–309, and 336–356; these read FRAL…SPIF, FVPS…SILL, TWIM…DDFV, MLGQ…VMHI, LGYF…NAVN, GLAI…SYVA, AGEL…FLWF, MFMG…LAIM, IIAG…VSVF, and KIVV…IATL.

This sequence belongs to the glycosyltransferase 4 family. MraY subfamily. Requires Mg(2+) as cofactor.

It is found in the cell inner membrane. It catalyses the reaction UDP-N-acetyl-alpha-D-muramoyl-L-alanyl-gamma-D-glutamyl-meso-2,6-diaminopimeloyl-D-alanyl-D-alanine + di-trans,octa-cis-undecaprenyl phosphate = di-trans,octa-cis-undecaprenyl diphospho-N-acetyl-alpha-D-muramoyl-L-alanyl-D-glutamyl-meso-2,6-diaminopimeloyl-D-alanyl-D-alanine + UMP. Its pathway is cell wall biogenesis; peptidoglycan biosynthesis. Catalyzes the initial step of the lipid cycle reactions in the biosynthesis of the cell wall peptidoglycan: transfers peptidoglycan precursor phospho-MurNAc-pentapeptide from UDP-MurNAc-pentapeptide onto the lipid carrier undecaprenyl phosphate, yielding undecaprenyl-pyrophosphoryl-MurNAc-pentapeptide, known as lipid I. The sequence is that of Phospho-N-acetylmuramoyl-pentapeptide-transferase from Hydrogenobaculum sp. (strain Y04AAS1).